The sequence spans 184 residues: CASP-like protein 1U1 (184 aa).

The Cytoplasmic segment spans residues 1–30; the sequence is MSSTGTTLSASEGDKGFRNGAAPAKSKSHS. The chain crosses the membrane as a helical span at residues 31–51; that stretch reads TIALLRLLAFAATLSAFVTMI. At 52–76 the chain is on the extracellular side; the sequence is TNKQKITIGPFTRWSKWHYSDAFMW. The chain crosses the membrane as a helical span at residues 77–97; it reads FVVANCIAFIYLLFAAILGLI. At 98-111 the chain is on the cytoplasmic side; it reads SHSPMLVKHLVILD. The helical transmembrane segment at 112–132 threads the bilayer; sequence LIVSYMLFSAASAATAVAYIG. The Extracellular portion of the chain corresponds to 133-154; it reads KNGISQPGWTAICGVFERYCHH. The helical transmembrane segment at 155–175 threads the bilayer; that stretch reads VAGALVACFLGWLFLTIAVFL. Over 176–184 the chain is Cytoplasmic; the sequence is GMRRSPAAV.

The protein belongs to the Casparian strip membrane proteins (CASP) family. In terms of assembly, homodimer and heterodimers.

Its subcellular location is the cell membrane. This chain is CASP-like protein 1U1, found in Marchantia polymorpha (Common liverwort).